Consider the following 153-residue polypeptide: Small heat shock protein HspB (153 aa).

The sHSP domain occupies 30–140 (AGTEDNYPPC…KPRRISISGS (111 aa)).

It belongs to the small heat shock protein (HSP20) family.

The chain is Small heat shock protein HspB (hspB) from Bradyrhizobium diazoefficiens (strain JCM 10833 / BCRC 13528 / IAM 13628 / NBRC 14792 / USDA 110).